A 275-amino-acid chain; its full sequence is Uridine-5'-phosphate dioxygenase (275 aa).

3 residues coordinate Fe cation: His105, Asp107, and His247.

Requires Fe(2+) as cofactor.

It catalyses the reaction UMP + 2-oxoglutarate + O2 = uridine-5'-aldehyde + succinate + phosphate + CO2. Its pathway is antibiotic biosynthesis. Enhanced by ascorbic acid and inhibited by Zn(2+). Functionally, dioxygenase involved in the biosynthesis of the capuramycin-type nucleoside antibiotic A-102395. Catalyzes the dephosphorylation and oxidation of UMP to generate uridine-5'-aldehyde. Can also use the alternative alpha-keto acids pyruvate and alpha-ketoadipate (2-oxoadipate), with very low efficiency. Cannot use alpha-ketobutyrate, alpha-ketovalerate and oxaloacetate. The protein is Uridine-5'-phosphate dioxygenase of Amycolatopsis sp.